The primary structure comprises 447 residues: Alpha-1,6-mannosyl-glycoprotein 2-beta-N-acetylglucosaminyltransferase (447 aa).

Over 1 to 9 (MRFRIYKRK) the chain is Cytoplasmic. Residues 10–29 (VLILTLVVAACGFVLWSSNG) traverse the membrane as a helical; Signal-anchor for type II membrane protein segment. The Lumenal segment spans residues 30–447 (RQRKNEALAP…ELCKSYRRLQ (418 aa)). N-linked (GlcNAc...) asparagine glycans are attached at residues N69 and N86. Residues 123-127 (QVHNR) and D154 each bind substrate. C196 and C210 are oxidised to a cystine. 229-233 (QTKHH) lines the substrate pocket. D261 is a binding site for Mn(2+). The cysteines at positions 283 and 286 are disulfide-linked. R298 is a substrate binding site. Intrachain disulfides connect C334-C357, C339-C440, and C378-C386. Residue H374 coordinates Mn(2+).

This sequence belongs to the glycosyltransferase 16 (GT16) protein family. In terms of assembly, homodimer. Requires Mn(2+) as cofactor.

It is found in the golgi apparatus membrane. The catalysed reaction is an N(4)-{beta-D-GlcNAc-(1-&gt;2)-alpha-D-Man-(1-&gt;3)-[alpha-D-Man-(1-&gt;6)]-beta-D-Man-(1-&gt;4)-beta-D-GlcNAc-(1-&gt;4)-beta-D-GlcNAc}-L-asparaginyl-[protein] + UDP-N-acetyl-alpha-D-glucosamine = N(4)-{beta-D-GlcNAc-(1-&gt;2)-alpha-D-Man-(1-&gt;3)-[beta-D-GlcNAc-(1-&gt;2)-alpha-D-Man-(1-&gt;6)]-beta-D-Man-(1-&gt;4)-beta-D-GlcNAc-(1-&gt;4)-beta-D-GlcNAc}-L-asparaginyl-[protein] + UDP + H(+). It functions in the pathway protein modification; protein glycosylation. Plays an essential role in protein N-glycosylation. Catalyzes the transfer of N-acetylglucosamine (GlcNAc) onto the free terminal mannose moiety in the core structure of the nascent N-linked glycan chain, giving rise to the second branch in complex glycans. The protein is Alpha-1,6-mannosyl-glycoprotein 2-beta-N-acetylglucosaminyltransferase (MGAT2) of Homo sapiens (Human).